The following is a 66-amino-acid chain: Large ribosomal subunit protein bL35 (66 aa).

Basic residues predominate over residues methionine 1 to lysine 46. The interval methionine 1–arginine 52 is disordered.

It belongs to the bacterial ribosomal protein bL35 family.

This Lactobacillus acidophilus (strain ATCC 700396 / NCK56 / N2 / NCFM) protein is Large ribosomal subunit protein bL35.